Here is a 901-residue protein sequence, read N- to C-terminus: Putative serine/threonine-protein kinase YPL150W (901 aa).

In terms of domain architecture, Protein kinase spans Y41–L287. Residues I47–V55 and K70 each bind ATP. D157 (proton acceptor) is an active-site residue. At S456 the chain carries Phosphoserine. The disordered stretch occupies residues A500–S530. S533 bears the Phosphoserine mark. The span at S588–T599 shows a compositional bias: low complexity. Disordered stretches follow at residues S588–L629 and T745–R770. A compositionally biased stretch (polar residues) spans G600–I613. Residues R759–R770 are compositionally biased toward basic residues.

The protein belongs to the protein kinase superfamily. Ser/Thr protein kinase family.

It catalyses the reaction L-seryl-[protein] + ATP = O-phospho-L-seryl-[protein] + ADP + H(+). It carries out the reaction L-threonyl-[protein] + ATP = O-phospho-L-threonyl-[protein] + ADP + H(+). Putative serine/threonine-protein kinase. In Saccharomyces cerevisiae (strain ATCC 204508 / S288c) (Baker's yeast), this protein is Putative serine/threonine-protein kinase YPL150W.